A 142-amino-acid polypeptide reads, in one-letter code: Gene 46 protein (142 aa).

A disordered region spans residues lysine 82–leucine 101.

The sequence is that of Gene 46 protein (46) from Mycobacterium (Mycobacteriophage L5).